Consider the following 368-residue polypeptide: tRNA 2-selenouridine synthase (368 aa).

One can recognise a Rhodanese domain in the interval 12–136 (FLGDAPLLDT…MRGFLLETIE (125 aa)). Cysteine 95 functions as the S-selanylcysteine intermediate in the catalytic mechanism.

Belongs to the SelU family. As to quaternary structure, monomer.

The catalysed reaction is 5-methylaminomethyl-2-thiouridine(34) in tRNA + selenophosphate + (2E)-geranyl diphosphate + H2O + H(+) = 5-methylaminomethyl-2-selenouridine(34) in tRNA + (2E)-thiogeraniol + phosphate + diphosphate. It catalyses the reaction 5-methylaminomethyl-2-thiouridine(34) in tRNA + (2E)-geranyl diphosphate = 5-methylaminomethyl-S-(2E)-geranyl-thiouridine(34) in tRNA + diphosphate. The enzyme catalyses 5-methylaminomethyl-S-(2E)-geranyl-thiouridine(34) in tRNA + selenophosphate + H(+) = 5-methylaminomethyl-2-(Se-phospho)selenouridine(34) in tRNA + (2E)-thiogeraniol. It carries out the reaction 5-methylaminomethyl-2-(Se-phospho)selenouridine(34) in tRNA + H2O = 5-methylaminomethyl-2-selenouridine(34) in tRNA + phosphate. Functionally, involved in the post-transcriptional modification of the uridine at the wobble position (U34) of tRNA(Lys), tRNA(Glu) and tRNA(Gln). Catalyzes the conversion of 2-thiouridine (S2U-RNA) to 2-selenouridine (Se2U-RNA). Acts in a two-step process involving geranylation of 2-thiouridine (S2U) to S-geranyl-2-thiouridine (geS2U) and subsequent selenation of the latter derivative to 2-selenouridine (Se2U) in the tRNA chain. In Bordetella bronchiseptica (strain ATCC BAA-588 / NCTC 13252 / RB50) (Alcaligenes bronchisepticus), this protein is tRNA 2-selenouridine synthase.